Consider the following 97-residue polypeptide: MSSPSSESSNAKSSPPKEEYRTPGLRGVKTTTLFRAVNPELFIKPNKPVMVFGIVTITMCVAYIAYLHATEENKRELYEAVDSEGNRYTRRKSSKWD.

The segment covering 1-14 (MSSPSSESSNAKSS) has biased composition (low complexity). Residues 1–26 (MSSPSSESSNAKSSPPKEEYRTPGLR) are disordered. A helical transmembrane segment spans residues 49-69 (VMVFGIVTITMCVAYIAYLHA).

Belongs to the SMIM8 family.

It is found in the membrane. This chain is Small integral membrane protein 8 (smim8), found in Xenopus tropicalis (Western clawed frog).